A 673-amino-acid chain; its full sequence is Flotillin family inner membrane protein sll1021 (673 aa).

Residues 60 to 80 (LLFFPVVIIAVIFLILVTIFL) form a helical membrane-spanning segment. The segment at 639 to 673 (LQDPPSVSPPSAAVSEDDWPDLAPPTETNFSPEEI) is disordered. Polar residues predominate over residues 664-673 (TETNFSPEEI).

Belongs to the band 7/mec-2 family. Flotillin subfamily. Homooligomerizes.

It localises to the cell inner membrane. Its subcellular location is the membrane raft. In terms of biological role, found in functional membrane microdomains (FMM) that may be equivalent to eukaryotic membrane rafts. FMMs are highly dynamic and increase in number as cells age. Flotillins are thought to be important factors in membrane fluidity. In Synechocystis sp. (strain ATCC 27184 / PCC 6803 / Kazusa), this protein is Flotillin family inner membrane protein sll1021.